Here is a 328-residue protein sequence, read N- to C-terminus: MTTLQIVLQGPGPWGFRLVGGKDFEQPLAISRVTPGSKAAIGNLCVGDVITAIDGENTSNMTHLEAQNKIKGCTDNMTLTVARSEQKIWSPLVTEEGKRHPYKMNLASEPQEALHIGSAHNRSAVPFTASPAFSSAPRVITNQYNNPAGLYSSENISSFNNALESKTAASGQENGRALDHSQLPSGLVIDKESEVYKMLQEKQELNEPPKQSTSFLVLQEILESEEKGDPNKPSGFRSVKAPVTKVAASIGNAQKLPMCDKCGTGIVGVFVKLRERHRHPECYVCTDCGTNLKQKGHFFVEDQIYCEKHARERVTPPEGYDVITVFPK.

At threonine 2 the chain carries N-acetylthreonine. The region spanning threonine 3–glutamate 85 is the PDZ domain. A phosphoserine mark is found at serine 90 and serine 130. Tyrosine 144 carries the phosphotyrosine modification. One can recognise an LIM zinc-binding domain in the interval proline 257–proline 316. Cysteine 259, cysteine 262, histidine 279, cysteine 282, cysteine 285, cysteine 288, cysteine 306, and histidine 309 together coordinate Zn(2+). Threonine 315 is subject to Phosphothreonine. Tyrosine 320 bears the Phosphotyrosine mark.

As to quaternary structure, interacts with ACTN1, ACTN2 and ACTN4. Interacts with PDLIM4.

The protein resides in the cytoplasm. It localises to the cytoskeleton. Its subcellular location is the myofibril. It is found in the sarcomere. The protein localises to the z line. In terms of biological role, cytoskeletal protein that may act as an adapter that brings other proteins (like kinases) to the cytoskeleton. Involved in assembly, disassembly and directioning of stress fibers in fibroblasts. Required for the localization of ACTN1 and PALLD to stress fibers. Required for cell migration and in maintaining cell polarity of fibroblasts. The polypeptide is PDZ and LIM domain protein 1 (PDLIM1) (Bos taurus (Bovine)).